A 21-amino-acid polypeptide reads, in one-letter code: Glutathione S-transferase 1 (21 aa).

It belongs to the GST superfamily. Phi family.

It carries out the reaction RX + glutathione = an S-substituted glutathione + a halide anion + H(+). Conjugation of reduced glutathione to a wide number of exogenous and endogenous hydrophobic electrophiles. In plants, may have a detoxification role against certain herbicides. The protein is Glutathione S-transferase 1 of Populus euphratica (Euphrates poplar).